The primary structure comprises 722 residues: Bifunctional UDP-N-acetylglucosamine 2-epimerase/N-acetylmannosamine kinase (722 aa).

5 residues coordinate UDP: Arg-19, Ser-23, Arg-113, His-220, and Asn-253. Residues Lys-259, Glu-271, Lys-280, and His-281 each contribute to the CMP-N-acetyl-beta-neuraminate site. UDP-binding residues include Val-282, Ser-301, Ser-302, Glu-307, and Arg-321. An N-acetylmannosamine kinase region spans residues 406–722 (TLSALAVDLG…VLDYTTRRIY (317 aa)). Position 413 (Asp-413) interacts with Mg(2+). Gly-416 lines the an N-acyl-D-mannosamine 6-phosphate pocket. ADP contacts are provided by Thr-417, Asn-418, and Arg-420. Positions 476, 477, 489, 516, 517, and 545 each coordinate an N-acyl-D-mannosamine 6-phosphate. An N-acyl-D-mannosamine contacts are provided by Gly-476, Arg-477, Thr-489, Asn-516, and Asp-517. The active site involves Asp-517. An N-acyl-D-mannosamine is bound by residues Glu-566 and His-569. Residue His-569 participates in an N-acyl-D-mannosamine 6-phosphate binding. 4 residues coordinate Zn(2+): His-569, Cys-579, Cys-581, and Cys-586. Glu-588 is an an N-acyl-D-mannosamine 6-phosphate binding site. Glu-588 lines the an N-acyl-D-mannosamine pocket.

It in the N-terminal section; belongs to the UDP-N-acetylglucosamine 2-epimerase family. This sequence in the C-terminal section; belongs to the ROK (NagC/XylR) family. As to quaternary structure, homodimer. Homotetramer. Homohexamer. The hexameric form exhibits both enzyme activities, whereas the dimeric form only catalyzes the phosphorylation of N-acyl-D-mannosamine. Phosphorylated. Phosphorylation by PKC activates the UDP-N-acetylglucosamine 2-epimerase activity. Highest expression in liver and placenta. Also found in heart, brain, lung, kidney, skeletal muscle and pancreas. Isoform 1 is expressed in heart, brain, kidney, liver, placenta, lung, spleen, pancreas, skeletal muscle and colon. Isoform 2 is expressed mainly in placenta, but also in brain, kidney, liver, lung, pancreas and colon. Isoform 3 is expressed at low level in kidney, liver, placenta and colon.

The protein localises to the cytoplasm. It is found in the cytosol. It catalyses the reaction UDP-N-acetyl-alpha-D-glucosamine + H2O = aldehydo-N-acetyl-D-mannosamine + UDP + H(+). The catalysed reaction is an N-acyl-D-mannosamine + ATP = an N-acyl-D-mannosamine 6-phosphate + ADP + H(+). The protein operates within amino-sugar metabolism; N-acetylneuraminate biosynthesis. Its activity is regulated as follows. The UDP-N-acetylglucosamine 2-epimerase activity, in contrast to the N-acetylmannosamine kinase activity, exhibits allosteric regulation by cytidine monophosphate-N-acetylneuraminic acid (CMP-Neu5Ac), the end product of neuraminic acid biosynthesis. Moreover, the activity is contingent upon the oligomeric state of the enzyme. The monomeric form is inactive, while the dimeric form selectively catalyzes the phosphorylation of N-acetylmannosamine. The hexameric form, on the other hand, demonstrates full proficiency in both enzyme activities. Furthermore, the UDP-N-acetylglucosamine 2-epimerase activity is increased by PKC-mediated phosphorylation. Its function is as follows. Bifunctional enzyme that possesses both UDP-N-acetylglucosamine 2-epimerase and N-acetylmannosamine kinase activities, and serves as the initiator of the biosynthetic pathway leading to the production of N-acetylneuraminic acid (NeuAc), a critical precursor in the synthesis of sialic acids. By catalyzing this pivotal and rate-limiting step in sialic acid biosynthesis, this enzyme assumes a pivotal role in governing the regulation of cell surface sialylation, playing a role in embryonic angiogenesis. Sialic acids represent a category of negatively charged sugars that reside on the surface of cells as terminal components of glycoconjugates and mediate important functions in various cellular processes, including cell adhesion, signal transduction, and cellular recognition. This is Bifunctional UDP-N-acetylglucosamine 2-epimerase/N-acetylmannosamine kinase from Homo sapiens (Human).